A 339-amino-acid chain; its full sequence is Transmembrane protein 120B (339 aa).

Positions 1-77 (MSGQLERCER…ASREEAELVQ (77 aa)) form a coiled coil. A run of 6 helical transmembrane segments spans residues 102–124 (GLYL…AKFA), 132–152 (FKLY…FVLH), 159–179 (VFNF…SILI), 187–207 (GWWV…LTWP), 270–290 (FLLP…VTLF), and 302–322 (QVFV…LTTL).

The protein belongs to the TMEM120 family. In terms of assembly, heterooligomer with TMEM120A.

The protein resides in the nucleus inner membrane. Necessary for efficient adipogenesis. Does not show ion channel activity. The polypeptide is Transmembrane protein 120B (Homo sapiens (Human)).